A 1232-amino-acid chain; its full sequence is DNA topoisomerase 2 (1232 aa).

ATP is bound by residues asparagine 65, asparagine 94, 122–124 (SSN), 135–142 (GRHGYGAK), and 352–354 (QNK). The Toprim domain maps to 432–546 (RTLIVTEGDS…SLLNRNPGFI (115 aa)). Mg(2+) contacts are provided by glutamate 438, aspartate 515, and aspartate 517. The Topo IIA-type catalytic domain maps to 681–1097 (LAHAVDGLKP…APVQMWLDEL (417 aa)). The O-(5'-phospho-DNA)-tyrosine intermediate role is filled by tyrosine 771. The tract at residues 952-961 (SLTQRIYING) is interaction with DNA. A disordered region spans residues 1161–1184 (YVPPPPSKRPHVGQSVGGGGGGGS). Residues 1175-1184 (SVGGGGGGGS) are compositionally biased toward gly residues.

It belongs to the type II topoisomerase family. Homodimer. Mg(2+) is required as a cofactor. Requires Mn(2+) as cofactor. Ca(2+) serves as cofactor.

It localises to the nucleus. It catalyses the reaction ATP-dependent breakage, passage and rejoining of double-stranded DNA.. Control of topological states of DNA by transient breakage and subsequent rejoining of DNA strands. Topoisomerase II makes double-strand breaks. This Trypanosoma cruzi protein is DNA topoisomerase 2 (TOP2).